A 182-amino-acid chain; its full sequence is ATP-dependent protease subunit HslV (182 aa).

Residue T10 is part of the active site. A166, C169, and S172 together coordinate Na(+).

This sequence belongs to the peptidase T1B family. HslV subfamily. As to quaternary structure, a double ring-shaped homohexamer of HslV is capped on each side by a ring-shaped HslU homohexamer. The assembly of the HslU/HslV complex is dependent on binding of ATP.

It localises to the cytoplasm. It catalyses the reaction ATP-dependent cleavage of peptide bonds with broad specificity.. With respect to regulation, allosterically activated by HslU binding. Functionally, protease subunit of a proteasome-like degradation complex believed to be a general protein degrading machinery. The protein is ATP-dependent protease subunit HslV of Rickettsia felis (strain ATCC VR-1525 / URRWXCal2) (Rickettsia azadi).